The sequence spans 288 residues: Intermediate transcription factor 3 small subunit (288 aa).

This sequence belongs to the orthopoxvirus OPG134 family. As to quaternary structure, heterodimer of a 45 kDa (A23R) and a 32 kDa (A8R) subunit to form the virus intermediate transcription factor (VITF)-3.

In terms of biological role, acts with RNA polymerase to initiate transcription from intermediate gene promoters. The sequence is that of Intermediate transcription factor 3 small subunit (OPG134) from Vaccinia virus (strain Copenhagen) (VACV).